Consider the following 414-residue polypeptide: Ankyrin repeat domain-containing protein 10 (414 aa).

ANK repeat units follow at residues 18–47 (TLRF…RSDL), 54–83 (YGWT…SVNA), 88–117 (FAQT…NINK), 121–150 (VGET…QIDL), and 154–187 (SGLT…RYYS). A disordered region spans residues 310-332 (GVTSPSRHRIHTSNGTEEPEKAM).

In Gallus gallus (Chicken), this protein is Ankyrin repeat domain-containing protein 10 (ANKRD10).